We begin with the raw amino-acid sequence, 287 residues long: Oxaloacetate decarboxylase (287 aa).

S50 contacts substrate. D88 provides a ligand contact to Mg(2+). The substrate site is built by R159 and H235.

This sequence belongs to the isocitrate lyase/PEP mutase superfamily. Oxaloacetate decarboxylase family. As to quaternary structure, homotetramer; dimer of dimers. Mg(2+) is required as a cofactor.

The catalysed reaction is oxaloacetate + H(+) = pyruvate + CO2. In terms of biological role, catalyzes the decarboxylation of oxaloacetate into pyruvate. Seems to play a role in maintaining cellular concentrations of bicarbonate and pyruvate. This is Oxaloacetate decarboxylase from Chromohalobacter salexigens (strain ATCC BAA-138 / DSM 3043 / CIP 106854 / NCIMB 13768 / 1H11).